Consider the following 311-residue polypeptide: MSQNQEISKKEQYNLNKLQKRLRRNVGEAIADFNMIEEGDRIMVCLSGGKDSYTMLEILRNLQQSAPINFSLVAVNLDQKQPGFPEHVLPEYLEKLGVEYKIVEENTYGIVKEKIPEGKTTCSLCSRLRRGILYRTATELGATKIALGHHRDDILQTLFLNMFYGGKMKGMPPKLMSDDGKHIVIRPLAYCREKDIQRFADAKAFPIIPCNLCGSQPNLQRQVIADMLRDWDKRYPGRIETMFSAMQNVVPSHLCDTNLFDFKGITHGSEVVNGGDLAFDREEIPLQPVGWQPEEDENQLDELRLNVVEVK.

The PP-loop motif motif lies at 47–52 (SGGKDS). [4Fe-4S] cluster contacts are provided by cysteine 122, cysteine 125, and cysteine 213.

Belongs to the TtcA family. Homodimer. It depends on Mg(2+) as a cofactor. [4Fe-4S] cluster is required as a cofactor.

The protein localises to the cytoplasm. It carries out the reaction cytidine(32) in tRNA + S-sulfanyl-L-cysteinyl-[cysteine desulfurase] + AH2 + ATP = 2-thiocytidine(32) in tRNA + L-cysteinyl-[cysteine desulfurase] + A + AMP + diphosphate + H(+). The protein operates within tRNA modification. Functionally, catalyzes the ATP-dependent 2-thiolation of cytidine in position 32 of tRNA, to form 2-thiocytidine (s(2)C32). The sulfur atoms are provided by the cysteine/cysteine desulfurase (IscS) system. The protein is tRNA-cytidine(32) 2-sulfurtransferase of Escherichia coli (strain 55989 / EAEC).